The primary structure comprises 589 residues: V-type ATP synthase alpha chain (589 aa).

Residue 239–246 participates in ATP binding; that stretch reads GPFGAGKT.

This sequence belongs to the ATPase alpha/beta chains family.

The catalysed reaction is ATP + H2O + 4 H(+)(in) = ADP + phosphate + 5 H(+)(out). Its function is as follows. Produces ATP from ADP in the presence of a proton gradient across the membrane. The V-type alpha chain is a catalytic subunit. The polypeptide is V-type ATP synthase alpha chain (Treponema denticola (strain ATCC 35405 / DSM 14222 / CIP 103919 / JCM 8153 / KCTC 15104)).